A 416-amino-acid chain; its full sequence is LL-diaminopimelate aminotransferase (416 aa).

Substrate contacts are provided by Y25 and G52. Residues Y78, 115–116 (SK), Y140, N190, Y221, and 248–250 (SFS) contribute to the pyridoxal 5'-phosphate site. Substrate-binding residues include K116, Y140, and N190. The residue at position 251 (K251) is an N6-(pyridoxal phosphate)lysine. Pyridoxal 5'-phosphate is bound at residue R259.

Belongs to the class-I pyridoxal-phosphate-dependent aminotransferase family. Homodimer. Pyridoxal 5'-phosphate is required as a cofactor.

It is found in the cytoplasm. It catalyses the reaction (2S,6S)-2,6-diaminopimelate + 2-oxoglutarate = (S)-2,3,4,5-tetrahydrodipicolinate + L-glutamate + H2O + H(+). It participates in amino-acid biosynthesis; L-lysine biosynthesis via DAP pathway; LL-2,6-diaminopimelate from (S)-tetrahydrodipicolinate (aminotransferase route): step 1/1. Its function is as follows. Involved in the synthesis of meso-diaminopimelate (m-DAP or DL-DAP), required for both lysine and peptidoglycan biosynthesis. Catalyzes the direct conversion of tetrahydrodipicolinate to LL-diaminopimelate. The protein is LL-diaminopimelate aminotransferase (dapL) of Methanococcus maripaludis (strain DSM 14266 / JCM 13030 / NBRC 101832 / S2 / LL).